The chain runs to 152 residues: D-aminoacyl-tRNA deacylase (152 aa).

The Gly-cisPro motif, important for rejection of L-amino acids signature appears at glycine 137–proline 138.

Belongs to the DTD family. In terms of assembly, homodimer.

Its subcellular location is the cytoplasm. The enzyme catalyses glycyl-tRNA(Ala) + H2O = tRNA(Ala) + glycine + H(+). It carries out the reaction a D-aminoacyl-tRNA + H2O = a tRNA + a D-alpha-amino acid + H(+). An aminoacyl-tRNA editing enzyme that deacylates mischarged D-aminoacyl-tRNAs. Also deacylates mischarged glycyl-tRNA(Ala), protecting cells against glycine mischarging by AlaRS. Acts via tRNA-based rather than protein-based catalysis; rejects L-amino acids rather than detecting D-amino acids in the active site. By recycling D-aminoacyl-tRNA to D-amino acids and free tRNA molecules, this enzyme counteracts the toxicity associated with the formation of D-aminoacyl-tRNA entities in vivo and helps enforce protein L-homochirality. The chain is D-aminoacyl-tRNA deacylase from Methylibium petroleiphilum (strain ATCC BAA-1232 / LMG 22953 / PM1).